A 407-amino-acid polypeptide reads, in one-letter code: Protein-glutamine gamma-glutamyltransferase (407 aa).

Residues 1–31 form the signal peptide; it reads MRIRRRALVFATMSAVLCTAGFMPSAGEAAA. The propeptide occupies 32–76; that stretch reads DNGAGEETKSYAETYRLTADDVANINALNESAPAASSAGPSFRAP. Residues 62-72 are compositionally biased toward low complexity; the sequence is SAPAASSAGPS. Residues 62–98 are disordered; sequence SAPAASSAGPSFRAPDSDDRVTPPAEPLDRMPDPYRP. Positions 76-94 are enriched in basic and acidic residues; the sequence is PDSDDRVTPPAEPLDRMPD. C140 is an active-site residue. The disordered stretch occupies residues 282–322; that stretch reads QDRSSSADKRKYGDPDAFRPAPGTGLVDMSRDRNIPRSPTS. Over residues 286–298 the composition is skewed to basic and acidic residues; sequence SSADKRKYGDPDA. Active-site residues include D331 and H350.

The protein belongs to the bacterial TGase family.

The enzyme catalyses L-glutaminyl-[protein] + L-lysyl-[protein] = [protein]-L-lysyl-N(6)-5-L-glutamyl-[protein] + NH4(+). In terms of biological role, catalyzes the cross-linking of proteins and the conjugation of polyamines to proteins. This is Protein-glutamine gamma-glutamyltransferase from Streptomyces mobaraensis (Streptoverticillium mobaraense).